The following is a 700-amino-acid chain: Methionine synthase reductase (700 aa).

A Flavodoxin-like domain is found at 4 to 147; it reads FLLLYATQRG…VVEPWIDGLW (144 aa). FMN is bound by residues 10-14 and 93-124; these read TQRGQ and LLGL…QHFY. The hinge stretch occupies residues 168–247; the sequence is TLAQASDAPL…SSLSIPAVSP (80 aa). Residues serine 173 and serine 190 each carry the phosphoserine modification. Positions 272-534 constitute an FAD-binding FR-type domain; sequence DPIFQVPISK…PRATNSFHLP (263 aa). Residue lysine 292 participates in NADP(+) binding. FAD is bound by residues 452–455 and 488–491; these read RPYS and GVCT. Residues 611 to 612, 626 to 628, and aspartate 661 each bind NADP(+); these read SR and YVQ. Tryptophan 699 serves as a coordination point for FAD.

Forms a multiprotein complex with MMACHC, MMADHC and MTR. FAD serves as cofactor. It depends on FMN as a cofactor.

Its subcellular location is the cytoplasm. It catalyses the reaction 2 methylcob(III)alamin-[methionine synthase] + 2 S-adenosyl-L-homocysteine + NADP(+) + H(+) = 2 cob(II)alamin-[methionine synthase] + 2 S-adenosyl-L-methionine + NADPH. The catalysed reaction is 2 cob(II)alamin + A + 2 H2O + 2 H(+) = 2 aquacob(III)alamin + AH2. Functionally, key enzyme in methionine and folate homeostasis responsible for the reactivation of methionine synthase (MTR/MS) activity by catalyzing the reductive methylation of MTR-bound cob(II)alamin. Cobalamin (vitamin B12) forms a complex with MTR to serve as an intermediary in methyl transfer reactions that cycles between MTR-bound methylcob(III)alamin and MTR bound-cob(I)alamin forms, and occasional oxidative escape of the cob(I)alamin intermediate during the catalytic cycle leads to the inactive cob(II)alamin species. The processing of cobalamin in the cytosol occurs in a multiprotein complex composed of at least MMACHC, MMADHC, MTRR and MTR which may contribute to shuttle safely and efficiently cobalamin towards MTR in order to produce methionine. Also necessary for the utilization of methyl groups from the folate cycle, thereby affecting transgenerational epigenetic inheritance. Also acts as a molecular chaperone for methionine synthase by stabilizing apoMTR and incorporating methylcob(III)alamin into apoMTR to form the holoenzyme. Also serves as an aquacob(III)alamin reductase by reducing aquacob(III)alamin to cob(II)alamin; this reduction leads to stimulation of the conversion of apoMTR and aquacob(III)alamin to MTR holoenzyme. The chain is Methionine synthase reductase (Mtrr) from Rattus norvegicus (Rat).